We begin with the raw amino-acid sequence, 611 residues long: tRNA uridine 5-carboxymethylaminomethyl modification enzyme MnmG (611 aa).

Residue 12-17 (GGGHSG) participates in FAD binding. Residue 271-285 (GPRYCPSIEEKVYRF) participates in NAD(+) binding.

Belongs to the MnmG family. In terms of assembly, homodimer. Heterotetramer of two MnmE and two MnmG subunits. The cofactor is FAD.

It is found in the cytoplasm. Functionally, NAD-binding protein involved in the addition of a carboxymethylaminomethyl (cmnm) group at the wobble position (U34) of certain tRNAs, forming tRNA-cmnm(5)s(2)U34. In Karelsulcia muelleri (strain GWSS) (Sulcia muelleri), this protein is tRNA uridine 5-carboxymethylaminomethyl modification enzyme MnmG.